Consider the following 263-residue polypeptide: Phosphatidylglycerol--prolipoprotein diacylglyceryl transferase (263 aa).

The next 4 helical transmembrane spans lie at 16 to 36 (LAVSWYSLSYVVGILFGWFYA), 55 to 75 (FVTYAIIGIIVGGRLGYILLY), 92 to 112 (EGGMSFHGGAIGVIIAAYIFC), and 117 to 137 (LNFLSLTDIIAPVVPIGLFFG). Arg138 contributes to the a 1,2-diacyl-sn-glycero-3-phospho-(1'-sn-glycerol) binding site. 3 helical membrane passes run 172–192 (QLYEAFFEGLVLFCILAYAVF), 201–221 (GLNSGLFLMFYSLFRIIIEIF), and 234–254 (SLTMGQILSMPLLLLGIYLII).

The protein belongs to the Lgt family.

The protein localises to the cell inner membrane. It catalyses the reaction L-cysteinyl-[prolipoprotein] + a 1,2-diacyl-sn-glycero-3-phospho-(1'-sn-glycerol) = an S-1,2-diacyl-sn-glyceryl-L-cysteinyl-[prolipoprotein] + sn-glycerol 1-phosphate + H(+). The protein operates within protein modification; lipoprotein biosynthesis (diacylglyceryl transfer). Functionally, catalyzes the transfer of the diacylglyceryl group from phosphatidylglycerol to the sulfhydryl group of the N-terminal cysteine of a prolipoprotein, the first step in the formation of mature lipoproteins. The chain is Phosphatidylglycerol--prolipoprotein diacylglyceryl transferase from Rickettsia bellii (strain OSU 85-389).